Here is a 329-residue protein sequence, read N- to C-terminus: Phospho-N-acetylmuramoyl-pentapeptide-transferase (329 aa).

Helical transmembrane passes span 1 to 21 (MLLN…IGIP), 53 to 73 (MGGF…ALVF), 76 to 96 (FSPA…IGFL), 109 to 129 (GLTA…SYFI), 141 to 161 (ILSW…IWLV), 175 to 195 (GLAS…AVVH), 198 to 218 (YDVL…FVFN), 237 to 257 (FLAI…IGAV), and 309 to 329 (IVFW…YFAF).

It belongs to the glycosyltransferase 4 family. MraY subfamily. It depends on Mg(2+) as a cofactor.

The protein localises to the cell membrane. The catalysed reaction is UDP-N-acetyl-alpha-D-muramoyl-L-alanyl-gamma-D-glutamyl-L-lysyl-D-alanyl-D-alanine + di-trans,octa-cis-undecaprenyl phosphate = Mur2Ac(oyl-L-Ala-gamma-D-Glu-L-Lys-D-Ala-D-Ala)-di-trans,octa-cis-undecaprenyl diphosphate + UMP. It participates in cell wall biogenesis; peptidoglycan biosynthesis. Functionally, catalyzes the initial step of the lipid cycle reactions in the biosynthesis of the cell wall peptidoglycan: transfers peptidoglycan precursor phospho-MurNAc-pentapeptide from UDP-MurNAc-pentapeptide onto the lipid carrier undecaprenyl phosphate, yielding undecaprenyl-pyrophosphoryl-MurNAc-pentapeptide, known as lipid I. In Lactococcus lactis subsp. cremoris (strain MG1363), this protein is Phospho-N-acetylmuramoyl-pentapeptide-transferase.